The primary structure comprises 529 residues: Bifunctional purine biosynthesis protein PurH (529 aa).

Residues 1-148 form the MGS-like domain; sequence MQQPRPVRRA…KNHKDVAIVV (148 aa).

This sequence belongs to the PurH family.

The catalysed reaction is (6R)-10-formyltetrahydrofolate + 5-amino-1-(5-phospho-beta-D-ribosyl)imidazole-4-carboxamide = 5-formamido-1-(5-phospho-D-ribosyl)imidazole-4-carboxamide + (6S)-5,6,7,8-tetrahydrofolate. It catalyses the reaction IMP + H2O = 5-formamido-1-(5-phospho-D-ribosyl)imidazole-4-carboxamide. The protein operates within purine metabolism; IMP biosynthesis via de novo pathway; 5-formamido-1-(5-phospho-D-ribosyl)imidazole-4-carboxamide from 5-amino-1-(5-phospho-D-ribosyl)imidazole-4-carboxamide (10-formyl THF route): step 1/1. It functions in the pathway purine metabolism; IMP biosynthesis via de novo pathway; IMP from 5-formamido-1-(5-phospho-D-ribosyl)imidazole-4-carboxamide: step 1/1. The sequence is that of Bifunctional purine biosynthesis protein PurH from Cronobacter sakazakii (strain ATCC BAA-894) (Enterobacter sakazakii).